A 213-amino-acid polypeptide reads, in one-letter code: Andrastin A biosynthesis cluster protein B (213 aa).

Its function is as follows. Part of the gene cluster that mediates the biosynthesis of andrastins, meroterpenoid compounds that exhibit inhibitory activity against ras farnesyltransferase, suggesting that they could be promising leads for antitumor agents. The first step of the pathway is the synthesis of 3,5-dimethylorsellinic acid (DMOA) by the polyketide synthase adrD via condensation of one acetyl-CoA starter unit with 3 malonyl-CoA units and 2 methylations. DMAO is then converted to farnesyl-DMAO by the prenyltransferase adrG. The methyltransferase adrK catalyzes the methylation of the carboxyl group of farnesyl-DMAO to farnesyl-DMAO methyl ester which is further converted to epoxyfarnesyl-DMAO methyl ester by the FAD-dependent monooxygenase adrH. The terpene cyclase adrI then catalyzes the carbon skeletal rearrangement to generate the andrastin E, the first compound in the pathway having the andrastin scaffold, with the tetracyclic ring system. The post-cyclization tailoring enzymes adrF, adrE, adrJ, and adrA, are involved in the conversion of andrastin E into andrastin A. The short chain dehydrogenase adrF is responsible for the oxidation of the C-3 a hydroxyl group of andrastin E to yield the corresponding ketone, andrastin D. The ketoreductase adrE stereoselectively reduces the carbonyl moiety to reverse the stereochemistry of the C-3 position to yield andrastin F. The acetyltransferase adrJ is the acetyltransferase that attaches the acetyl group to the C-3 hydroxyl group of andrastin F to yield andrastin C. Finally, the cytochrome P450 monooxygenase adrA catalyzes two sequential oxidation reactions of the C-23 methyl group, to generate the corresponding alcohol andrastin B, and aldehyde andrastin A. This chain is Andrastin A biosynthesis cluster protein B, found in Penicillium rubens (strain ATCC 28089 / DSM 1075 / NRRL 1951 / Wisconsin 54-1255) (Penicillium chrysogenum).